The sequence spans 361 residues: Phosphoserine aminotransferase (361 aa).

R42 contributes to the L-glutamate binding site. Residues 76-77 (AR), W102, T153, D173, and Q196 contribute to the pyridoxal 5'-phosphate site. An N6-(pyridoxal phosphate)lysine modification is found at K197. 238 to 239 (NT) lines the pyridoxal 5'-phosphate pocket.

The protein belongs to the class-V pyridoxal-phosphate-dependent aminotransferase family. SerC subfamily. Homodimer. The cofactor is pyridoxal 5'-phosphate.

It localises to the cytoplasm. The catalysed reaction is O-phospho-L-serine + 2-oxoglutarate = 3-phosphooxypyruvate + L-glutamate. It carries out the reaction 4-(phosphooxy)-L-threonine + 2-oxoglutarate = (R)-3-hydroxy-2-oxo-4-phosphooxybutanoate + L-glutamate. It functions in the pathway amino-acid biosynthesis; L-serine biosynthesis; L-serine from 3-phospho-D-glycerate: step 2/3. The protein operates within cofactor biosynthesis; pyridoxine 5'-phosphate biosynthesis; pyridoxine 5'-phosphate from D-erythrose 4-phosphate: step 3/5. Its function is as follows. Catalyzes the reversible conversion of 3-phosphohydroxypyruvate to phosphoserine and of 3-hydroxy-2-oxo-4-phosphonooxybutanoate to phosphohydroxythreonine. The sequence is that of Phosphoserine aminotransferase from Pectobacterium carotovorum subsp. carotovorum (strain PC1).